The following is a 236-amino-acid chain: Venom metalloproteinase antarease-like TfasMP_A (236 aa).

One can recognise a Peptidase M12B domain in the interval 4–232; that stretch reads IVVEYYIVTD…KPAASCIFEQ (229 aa). His161 provides a ligand contact to Zn(2+). The active site involves Glu162. His165 and His171 together coordinate Zn(2+).

Belongs to the venom metalloproteinase (M12B) family. Zn(2+) serves as cofactor. Contains several disulfide bonds. As to expression, expressed by the venom gland.

It is found in the secreted. Its activity is regulated as follows. Inhibited by EDTA. In terms of biological role, acts as a metalloprotease. Penetrates intact tissue and specifically cleaves the vesicle-associated membrane protein 2 (VAMP2) (part of the SNARE complex) involved in pancreatic secretion, thus disrupting the normal vesicular traffic. In Tityus fasciolatus (Central Brazilian scorpion), this protein is Venom metalloproteinase antarease-like TfasMP_A.